The following is a 277-amino-acid chain: Large ribosomal subunit protein uL2c (277 aa).

The segment at Val224 to Arg257 is disordered.

The protein belongs to the universal ribosomal protein uL2 family. Part of the 50S ribosomal subunit.

It is found in the plastid. Its subcellular location is the chloroplast. In Anthoceros angustus (Hornwort), this protein is Large ribosomal subunit protein uL2c (rpl2).